Consider the following 349-residue polypeptide: Succinylglutamate desuccinylase (349 aa).

The Zn(2+) site is built by His70, Glu73, and His166. Glu229 is an active-site residue.

The protein belongs to the AspA/AstE family. Succinylglutamate desuccinylase subfamily. Zn(2+) is required as a cofactor.

The catalysed reaction is N-succinyl-L-glutamate + H2O = L-glutamate + succinate. It functions in the pathway amino-acid degradation; L-arginine degradation via AST pathway; L-glutamate and succinate from L-arginine: step 5/5. Functionally, transforms N(2)-succinylglutamate into succinate and glutamate. In Burkholderia thailandensis (strain ATCC 700388 / DSM 13276 / CCUG 48851 / CIP 106301 / E264), this protein is Succinylglutamate desuccinylase.